The primary structure comprises 585 residues: Epithelial sodium channel subunit gamma (585 aa).

At 1–55 (MAPGEKIKAKIKKNLPVTGPQAPTIKELMRWYCLNTNTHGCRRIVVSRGRLRRLL) the chain is on the cytoplasmic side. Residues 56–76 (WIGFTLTAVALILWQCALLVF) traverse the membrane as a helical segment. At 77–477 (SFYTVSVSIK…GGQLGLWMSC (401 aa)) the chain is on the extracellular side. 6 disulfides stabilise this stretch: Cys100–Cys219, Cys308–Cys393, Cys330–Cys389, Cys334–Cys385, Cys343–Cys370, and Cys345–Cys359. An N-linked (GlcNAc...) asparagine glycan is attached at Asn207. A glycan (N-linked (GlcNAc...) asparagine) is linked at Asn433. Residues 478-498 (SVVCVIEIIEVFFIDFFSIIA) traverse the membrane as a helical segment. Topologically, residues 499-585 (RRQWQKAKEW…LTDTQMLDEL (87 aa)) are cytoplasmic. Residues 513–534 (QAPPCPEAPRSPQGQDNPALDI) are disordered. The PY motif; recruits WW domain-containing proteins and is thereby required for ubiquitination and inhibition of the channel by NEDD4 and NEDD4L signature appears at 559–563 (PPPKY).

This sequence belongs to the amiloride-sensitive sodium channel (TC 1.A.6) family. SCNN1G subfamily. Component of the heterotrimeric epithelial sodium channel (ENaC) composed of an alpha/SCNN1A, a beta/SCNN1B and a gamma/SCNN1G subunit. An additional delta/SCNN1D subunit can replace the alpha/SCNN1A subunit to form an alternative channel with specific properties. Interacts with WWP1 (via WW domains). Interacts with WWP2 (via WW domains); inhibits the channel. Interacts with the full-length immature form of PCSK9 (pro-PCSK9); inhibits ENaC by promoting its proteasomal degradation. Interacts with BPIFA1; the interaction is indirect via SCNN1B and inhibits the proteolytic maturation of SCNN1A and SCNN1G and the activation of ENaC. In terms of processing, phosphorylated on serine and threonine residues. Aldosterone and insulin increase the basal level of phosphorylation. Ubiquitinated. Can be ubiquitinated at multiple sites and undergo monoubiquitination and polyubiquitination. Ubiquitination by NEDD4 or NEDD4L inhibits the ENaC channel through endocytosis, intracellular retention and degradation of its individual subunits. Post-translationally, ENaC is activated through the proteolytic maturation of its subunits. Furin cleaves the SCNN1G subunit first, followed by cleavage by prostasin (PRSS8), which results in a stepwise increase in the open probability of the channel due to the release of an inhibitory tract. BPIFA1, which is recruited by the SCNN1B subunit, prevents the proteolytic activation of ENaC. In terms of processing, N-glycosylated. N-linked glycans are processed to complex type during ENaC complex assembly and transport to the plasma membrane.

The protein resides in the apical cell membrane. It catalyses the reaction Na(+)(in) = Na(+)(out). Originally identified and characterized by its inhibition by the diuretic drug amiloride. In terms of biological role, this is one of the three pore-forming subunits of the heterotrimeric epithelial sodium channel (ENaC), a critical regulator of sodium balance and fluid homeostasis. ENaC operates in epithelial tissues, where it mediates the electrodiffusion of sodium ions from extracellular fluid through the apical membrane of cells, with water following osmotically. It plays a key role in maintaining sodium homeostasis through electrogenic sodium reabsorption in the kidneys. Additionally, ENaC is essential for airway surface liquid homeostasis, which is crucial for proper mucus clearance. This is Epithelial sodium channel subunit gamma from Pan troglodytes (Chimpanzee).